Reading from the N-terminus, the 360-residue chain is Fructose-bisphosphate aldolase 1 (360 aa).

D-glyceraldehyde 3-phosphate is bound at residue Ser-63. The active-site Proton donor is Asp-110. The Zn(2+) site is built by His-111, Asp-145, Glu-175, and His-227. Residue Gly-228 participates in dihydroxyacetone phosphate binding. His-266 lines the Zn(2+) pocket. 267 to 269 (GGS) provides a ligand contact to dihydroxyacetone phosphate.

It belongs to the class II fructose-bisphosphate aldolase family. As to quaternary structure, homodimer. Zn(2+) is required as a cofactor.

It catalyses the reaction beta-D-fructose 1,6-bisphosphate = D-glyceraldehyde 3-phosphate + dihydroxyacetone phosphate. Its pathway is carbohydrate degradation; glycolysis; D-glyceraldehyde 3-phosphate and glycerone phosphate from D-glucose: step 4/4. In terms of biological role, catalyzes the aldol condensation of dihydroxyacetone phosphate (DHAP or glycerone-phosphate) with glyceraldehyde 3-phosphate (G3P) to form fructose 1,6-bisphosphate (FBP) in gluconeogenesis and the reverse reaction in glycolysis. The chain is Fructose-bisphosphate aldolase 1 (FBA1) from Paracoccidioides lutzii (strain ATCC MYA-826 / Pb01) (Paracoccidioides brasiliensis).